The primary structure comprises 62 residues: Large ribosomal subunit protein eL19 (62 aa).

Belongs to the eukaryotic ribosomal protein eL19 family.

The sequence is that of Large ribosomal subunit protein eL19 (RPL19) from Zea mays (Maize).